A 146-amino-acid polypeptide reads, in one-letter code: Transcription antitermination protein NusB (146 aa).

Belongs to the NusB family.

Its function is as follows. Involved in transcription antitermination. Required for transcription of ribosomal RNA (rRNA) genes. Binds specifically to the boxA antiterminator sequence of the ribosomal RNA (rrn) operons. The polypeptide is Transcription antitermination protein NusB (Solibacter usitatus (strain Ellin6076)).